Consider the following 646-residue polypeptide: Long-chain fatty acid transport protein 1 (646 aa).

Over 1–13 (MRAPGAGTASVAS) the chain is Extracellular. Residues 14–34 (LALLWFLGLPWTWSAAAAFCV) form a helical membrane-spanning segment. Over 35–646 (YVGGGGWRFL…ARICAGDFSL (612 aa)) the chain is Cytoplasmic. The tract at residues 191–475 (EVSEQLGKSL…YVSDSATNKK (285 aa)) is sufficient for oligomerization. Residue 246 to 257 (YIYTSGTTGLPK) coordinates AMP.

It belongs to the ATP-dependent AMP-binding enzyme family. Self-associates. May function as a homodimer. Interacts with EPRS1; mediates the translocation of SLC27A1 from the cytoplasm to the plasma membrane thereby increasing the uptake of long-chain fatty acids. Interacts with DGAT2 and this interaction is enhanced in the presence of ZFYVE1. As to expression, higher expression in white adipose tissue than in heart. Highest expression in skeletal muscle, heart and fat. Lower levels in brain, kidney, lung, liver and testis. No expression in spleen or intestine.

It is found in the cell membrane. The protein localises to the mitochondrion outer membrane. It localises to the endomembrane system. Its subcellular location is the cytoplasm. The catalysed reaction is a fatty acid(in) = a fatty acid(out). It catalyses the reaction (9Z)-octadecenoate(out) = (9Z)-octadecenoate(in). The enzyme catalyses hexadecanoate(out) = hexadecanoate(in). It carries out the reaction (5Z,8Z,11Z,14Z)-eicosatetraenoate(out) = (5Z,8Z,11Z,14Z)-eicosatetraenoate(in). The catalysed reaction is (9Z,12Z)-octadecadienoate(out) = (9Z,12Z)-octadecadienoate(in). It catalyses the reaction a long-chain fatty acid + ATP + CoA = a long-chain fatty acyl-CoA + AMP + diphosphate. The enzyme catalyses (5Z,8Z,11Z,14Z)-eicosatetraenoate + ATP + CoA = (5Z,8Z,11Z,14Z)-eicosatetraenoyl-CoA + AMP + diphosphate. It carries out the reaction a very long-chain fatty acid + ATP + CoA = a very long-chain fatty acyl-CoA + AMP + diphosphate. The catalysed reaction is tetracosanoate + ATP + CoA = tetracosanoyl-CoA + AMP + diphosphate. With respect to regulation, inhibited by Triacsin C. Both insulin and muscle contraction stimulate translocation to the plasma membrane in muscle, increasing fatty acid transport activity. In terms of biological role, mediates the import of long-chain fatty acids (LCFA) into the cell by facilitating their transport at the plasma membrane. Also functions as an acyl-CoA ligase catalyzing the ATP-dependent formation of fatty acyl-CoA using LCFA and very-long-chain fatty acids (VLCFA) as substrates, which prevents fatty acid efflux from cells and might drive more fatty acid uptake. May act directly as a bona fide transporter, or alternatively, in a cytoplasmic or membrane-associated multimeric protein complex to trap and draw fatty acids towards accumulation. Plays a pivotal role in regulating available LCFA substrates from exogenous sources in tissues undergoing high levels of beta-oxidation or triglyceride synthesis. May be involved in regulation of cholesterol metabolism. Probably involved in fatty acid transport across the blood barrier. This is Long-chain fatty acid transport protein 1 from Mus musculus (Mouse).